The following is a 541-amino-acid chain: Chaperonin GroEL (541 aa).

Residues 29–32, 86–90, Gly413, 478–480, and Asp494 contribute to the ATP site; these read TLGP, DGTTT, and NAA.

The protein belongs to the chaperonin (HSP60) family. Forms a cylinder of 14 subunits composed of two heptameric rings stacked back-to-back. Interacts with the co-chaperonin GroES.

The protein localises to the cytoplasm. It catalyses the reaction ATP + H2O + a folded polypeptide = ADP + phosphate + an unfolded polypeptide.. In terms of biological role, together with its co-chaperonin GroES, plays an essential role in assisting protein folding. The GroEL-GroES system forms a nano-cage that allows encapsulation of the non-native substrate proteins and provides a physical environment optimized to promote and accelerate protein folding. This is Chaperonin GroEL from Agathobacter rectalis (strain ATCC 33656 / DSM 3377 / JCM 17463 / KCTC 5835 / VPI 0990) (Eubacterium rectale).